A 371-amino-acid chain; its full sequence is Barbiturase 2 (371 aa).

Residues 1-104 form an RU A region; that stretch reads MTRPIEVRKV…TIFAYAPEGR (104 aa). Residues R53 and 83 to 84 contribute to the substrate site; that span reads SG. The RU B stretch occupies residues 112 to 247; it reads RVTVGYAMSE…AQIVVVGNAR (136 aa). K162 is a catalytic residue. Substrate is bound by residues N194 and 230-231; that span reads SS. S230 acts as the Nucleophile in catalysis. The tract at residues 253 to 371 is RU C; the sequence is FRVGHSIMKD…PVIAIVDLEA (119 aa). A Mg(2+)-binding site is contributed by E303. Substrate contacts are provided by residues K330 and 349–350; that span reads SV. 5 residues coordinate Mg(2+): A352, Q355, G356, P357, and G360.

Belongs to the cyclic amide hydrolase (CyAH) family. Homotetramer.

It carries out the reaction barbiturate + H2O = 3-oxo-3-ureidopropanoate. Its pathway is pyrimidine metabolism; uracil degradation via oxidative pathway; malonate and urea from uracil: step 2/3. In terms of biological role, responsible for the hydrolysis of barbituric acid (2,4,6-trihydroxy-1,3-pyrimidine), an intermediate in the oxidative catabolism of pyrimidines. Catalyzes the hydrolytic opening of the pyrimidine ring of barbituric acid to yield ureidomalonic acid. Can also use cyanuric acid as a substrate, albeit with lower efficiency. This Nocardioides sp. (strain ATCC BAA-499 / JS614) protein is Barbiturase 2.